We begin with the raw amino-acid sequence, 732 residues long: MSAETSTTPAPAENTNGTPDNAPAPEVTAVEAPATTSQPHSASLYVGELDPSVTEAMLYELFSSIGQVASIRVCRDAVTRRSLGYAYVNYNDTAHGERALDELNYTLIKGKPCRIMWSQRDPALRKTGQGNVFIKNLDSAIDNKALHDTFAAFGNILSCKVAQDEFGVSKGYGFVHYETAEAANNAIKHVNGMLLNDKKVFVGHHISKKDRQSKFEEMKANFTNIYIKNIDPEVEDEEFRKLFEKFGEITSATLSRDSEGKSRGFGFVNFSTHESAQAAVEEMNDKEVRSQKLYVGRAQKKHEREEELRKQYEAARMEKASKYQGVNLYVKNLTDDVDDDKLRELFGPYGTITSAKVMRDTAPVETATPESETKESANKENEKAAEGEKEPAAEEKEKEEKKEAEQKPEKKPLGKSKGFGFVCFSSPDEASKAVTEMNQRMVNGKPLYVALAQRKDVRRSQLEASIQARNNIRQQQAAAAAGMGQAYMAPAVFYGPGQQGFIPGAQRGGMFPPQPGMMMGMPGRPGQYPGPFPGQQGGRGVGPNQQIPPNFQGLPMGAMQGPGIPNGMGYPMVQGQFGGGRGRGQVPGMGGPMRGGYGGGRGGVPLGGQMRPGQGGRGQAVGQPGPETPVGVLTAQALSAAPPQQQKQMLGEALYPKIQATQPELAGKITGMLLEMDNTELLGLLEDDEALRAKVDEALSVYDEYMKNKSDEPAAEKPKEAAQEAPAEENKA.

The span at 1–19 shows a compositional bias: polar residues; sequence MSAETSTTPAPAENTNGTP. The segment at 1-26 is disordered; sequence MSAETSTTPAPAENTNGTPDNAPAPE. 4 RRM domains span residues 42-120, 130-207, 223-300, and 326-454; these read ASLY…WSQR, GNVF…HHIS, TNIY…RAQK, and VNLY…LAQR. 2 disordered regions span residues 357-413 and 706-732; these read VMRD…KKPL and MKNK…ENKA. Basic and acidic residues predominate over residues 371 to 412; it reads SETKESANKENEKAAEGEKEPAAEEKEKEEKKEAEQKPEKKP. The 78-residue stretch at 630-707 folds into the PABC domain; it reads VGVLTAQALS…ALSVYDEYMK (78 aa).

It belongs to the polyadenylate-binding protein type-1 family.

It is found in the cytoplasm. The protein resides in the nucleus. Functionally, binds the poly(A) tail of mRNA. Appears to be an important mediator of the multiple roles of the poly(A) tail in mRNA biogenesis, stability and translation. In the nucleus, involved in both mRNA cleavage and polyadenylation. Is also required for efficient mRNA export to the cytoplasm. Acts in concert with a poly(A)-specific nuclease (PAN) to affect poly(A) tail shortening, which may occur concomitantly with either nucleocytoplasmic mRNA transport or translational initiation. In the cytoplasm, stimulates translation initiation and regulates mRNA decay through translation termination-coupled poly(A) shortening, probably mediated by PAN. The protein is Polyadenylate-binding protein, cytoplasmic and nuclear (pab1) of Emericella nidulans (strain FGSC A4 / ATCC 38163 / CBS 112.46 / NRRL 194 / M139) (Aspergillus nidulans).